The following is a 242-amino-acid chain: tRNA pseudouridine synthase A (242 aa).

Residue D51 is the Nucleophile of the active site. Y107 provides a ligand contact to substrate.

The protein belongs to the tRNA pseudouridine synthase TruA family. In terms of assembly, homodimer.

It carries out the reaction uridine(38/39/40) in tRNA = pseudouridine(38/39/40) in tRNA. Its function is as follows. Formation of pseudouridine at positions 38, 39 and 40 in the anticodon stem and loop of transfer RNAs. The sequence is that of tRNA pseudouridine synthase A from Helicobacter pylori (strain Shi470).